The sequence spans 156 residues: Urease accessory protein UreE (156 aa).

The interval 133–156 is disordered; sequence RPESGAYGSGRTMGHDHGPFHVHA. The segment covering 145–156 has biased composition (basic and acidic residues); sequence MGHDHGPFHVHA.

The protein belongs to the UreE family.

The protein localises to the cytoplasm. Its function is as follows. Involved in urease metallocenter assembly. Binds nickel. Probably functions as a nickel donor during metallocenter assembly. This is Urease accessory protein UreE from Rhodobacter capsulatus (Rhodopseudomonas capsulata).